The primary structure comprises 156 residues: Small ribosomal subunit protein uS7 (156 aa).

Belongs to the universal ribosomal protein uS7 family. As to quaternary structure, part of the 30S ribosomal subunit. Contacts proteins S9 and S11.

One of the primary rRNA binding proteins, it binds directly to 16S rRNA where it nucleates assembly of the head domain of the 30S subunit. Is located at the subunit interface close to the decoding center, probably blocks exit of the E-site tRNA. The polypeptide is Small ribosomal subunit protein uS7 (Proteus mirabilis (strain HI4320)).